The primary structure comprises 489 residues: Cytochrome P450 monooxygenase ataF (489 aa).

A helical membrane pass occupies residues Trp-12–Val-32. Asn-289 is a glycosylation site (N-linked (GlcNAc...) asparagine). A heme-binding site is contributed by Cys-434.

It belongs to the cytochrome P450 family. Heme is required as a cofactor.

The protein resides in the membrane. Its pathway is mycotoxin biosynthesis. Its function is as follows. Cytochrome P450 monooxygenase; part of the gene cluster that mediates the biosynthesis of acetylaranotin, a member of the epipolythiodioxopiperazine (ETP) class of toxins characterized by a disulfide-bridged cyclic dipeptide. The first step of acetylaranotin biosynthesis is performed by the NRPS ataP which produces diketopiperazine cyclo-L-Phe-L-Phe via the condensation of 2 phenylalanines (L-Phe). The ataC domain of ataTC then catalyzes the formation of bishydroxylation of cyclo-L-Phe-L-Phe. The glutathione S-transferase domain ataG in ataIMG further catalyzes the conjugation of two glutathiones to the bishydroxylated intermediate. Next, the dipeptidase ataJ removes the Glu residues. The following step is performed by the carbon sulfur lyase domain ataI of ataIMG which may convert the bis-cysteinyl adduct to yield an epidithiol intermediate. The ataT domain from ataTC then catalyzes the oxidation of the free dithiols, followed by a cyclization step catalyzed by the cytochrome P450 ataF. AtaF probably acts as an epoxidase to promote a dual epoxidation formation at C8 and C9 along with C8' and C9', followed by the spontaneous nucleophilic attack of the amide nitrogens N10 and N10' to yield an intermediate with the pyrrolidine partial structure. The final steps of acetylaranotin biosynthesis involve the acetylation and ring rearrangement of an epitetrathiodiketopiperazine intermediate to produce acetylaranotin. AtaH probably catalyzes the acetylation of epitetrathiodiketopiperazine to produce a diacetate and ataY is responsible for the formation of the dihydrooxepin moiety that converts the diacetate intermediate to acetylaranotin via acetylapoaranotin. Both enzymes could function independently in the absence of the other. The acetylaranotin bis-thiomethyltransferase ataS located outside of acetylaranotin gene cluster is the main thiomethyltransferase responsible for converting acetylaranotin and its related intermediates to their methylated forms. The sequence is that of Cytochrome P450 monooxygenase ataF from Aspergillus terreus (strain NIH 2624 / FGSC A1156).